We begin with the raw amino-acid sequence, 247 residues long: Ubiquinone biosynthesis O-methyltransferase (247 aa).

Residues arginine 39, glycine 70, aspartate 91, and methionine 134 each contribute to the S-adenosyl-L-methionine site.

The protein belongs to the methyltransferase superfamily. UbiG/COQ3 family.

It catalyses the reaction a 3-demethylubiquinol + S-adenosyl-L-methionine = a ubiquinol + S-adenosyl-L-homocysteine + H(+). The enzyme catalyses a 3-(all-trans-polyprenyl)benzene-1,2-diol + S-adenosyl-L-methionine = a 2-methoxy-6-(all-trans-polyprenyl)phenol + S-adenosyl-L-homocysteine + H(+). The protein operates within cofactor biosynthesis; ubiquinone biosynthesis. O-methyltransferase that catalyzes the 2 O-methylation steps in the ubiquinone biosynthetic pathway. The sequence is that of Ubiquinone biosynthesis O-methyltransferase from Cereibacter sphaeroides (strain ATCC 17023 / DSM 158 / JCM 6121 / CCUG 31486 / LMG 2827 / NBRC 12203 / NCIMB 8253 / ATH 2.4.1.) (Rhodobacter sphaeroides).